We begin with the raw amino-acid sequence, 143 residues long: Mannitol-specific phosphotransferase enzyme IIA component (143 aa).

Residues 1 to 142 (MKLLKNNIYI…DKVLEFLAKH (142 aa)) form the PTS EIIA type-2 domain. The Tele-phosphohistidine intermediate role is filled by H61. Residue H61 is modified to Phosphohistidine; by HPr.

Its subcellular location is the cytoplasm. The phosphoenolpyruvate-dependent sugar phosphotransferase system (sugar PTS), a major carbohydrate active transport system, catalyzes the phosphorylation of incoming sugar substrates concomitantly with their translocation across the cell membrane. The enzyme II CmtAB PTS system is involved in D-mannitol transport. The polypeptide is Mannitol-specific phosphotransferase enzyme IIA component (mtlF) (Mycoplasma pneumoniae (strain ATCC 29342 / M129 / Subtype 1) (Mycoplasmoides pneumoniae)).